The primary structure comprises 366 residues: tRNA/tmRNA (uracil-C(5))-methyltransferase (366 aa).

Positions 188, 216, 221, 237, and 297 each coordinate S-adenosyl-L-methionine. Catalysis depends on C322, which acts as the Nucleophile. E356 functions as the Proton acceptor in the catalytic mechanism.

The protein belongs to the class I-like SAM-binding methyltransferase superfamily. RNA M5U methyltransferase family. TrmA subfamily.

The catalysed reaction is uridine(54) in tRNA + S-adenosyl-L-methionine = 5-methyluridine(54) in tRNA + S-adenosyl-L-homocysteine + H(+). It catalyses the reaction uridine(341) in tmRNA + S-adenosyl-L-methionine = 5-methyluridine(341) in tmRNA + S-adenosyl-L-homocysteine + H(+). In terms of biological role, dual-specificity methyltransferase that catalyzes the formation of 5-methyluridine at position 54 (m5U54) in all tRNAs, and that of position 341 (m5U341) in tmRNA (transfer-mRNA). This Histophilus somni (strain 129Pt) (Haemophilus somnus) protein is tRNA/tmRNA (uracil-C(5))-methyltransferase.